The following is a 364-amino-acid chain: MSKAPKDTKVVIGMSGGVDSSVAALLLKQQGYDVVGIFMKNWDESDELGYCTSAEDYEDVRRVCDQIGIPYYSVNFEKEYWDRVFTYFLNEYKAGRTPNPDVMCNKEIKFKAFLDHAIKLGADYLATGHYAQVDYSDGEYRLLRGVDTNKDQTYFLNQLNQYQLSKAMFPVGHLQKKDLRQIALDAGLATASKKDSTGICFIGERNFKEFLSNYLPAKPGKIISLDGEVKGKHDGLMYYTLGQRKGLGIGGAGTGEPWFVVDKDLEKNILYVTQGETHPSLYSRGLIGADLQWVSENPKPSVIKCTAKFRYRQPDQGVTVYVEEGNTCRVMFDEPQKAITPGQAVVFYDGVVCLGGATIDQILK.

Residues 13-20 (GMSGGVDS) and Met-39 contribute to the ATP site. Residues 99 to 101 (NPD) are interaction with target base in tRNA. Cys-104 acts as the Nucleophile in catalysis. A disulfide bond links Cys-104 and Cys-200. Gly-128 contributes to the ATP binding site. The tract at residues 150-152 (KDQ) is interaction with tRNA. The active-site Cysteine persulfide intermediate is Cys-200. Residues 310 to 311 (RY) are interaction with tRNA.

Belongs to the MnmA/TRMU family.

It is found in the cytoplasm. The enzyme catalyses S-sulfanyl-L-cysteinyl-[protein] + uridine(34) in tRNA + AH2 + ATP = 2-thiouridine(34) in tRNA + L-cysteinyl-[protein] + A + AMP + diphosphate + H(+). In terms of biological role, catalyzes the 2-thiolation of uridine at the wobble position (U34) of tRNA, leading to the formation of s(2)U34. The chain is tRNA-specific 2-thiouridylase MnmA from Alkaliphilus oremlandii (strain OhILAs) (Clostridium oremlandii (strain OhILAs)).